The following is a 287-amino-acid chain: Phosphatidylserine decarboxylase proenzyme (287 aa).

Active-site charge relay system; for autoendoproteolytic cleavage activity residues include Asp-90, His-147, and Ser-252. The active-site Schiff-base intermediate with substrate; via pyruvic acid; for decarboxylase activity is Ser-252. At Ser-252 the chain carries Pyruvic acid (Ser); by autocatalysis.

This sequence belongs to the phosphatidylserine decarboxylase family. PSD-B subfamily. Prokaryotic type I sub-subfamily. As to quaternary structure, heterodimer of a large membrane-associated beta subunit and a small pyruvoyl-containing alpha subunit. Pyruvate is required as a cofactor. Is synthesized initially as an inactive proenzyme. Formation of the active enzyme involves a self-maturation process in which the active site pyruvoyl group is generated from an internal serine residue via an autocatalytic post-translational modification. Two non-identical subunits are generated from the proenzyme in this reaction, and the pyruvate is formed at the N-terminus of the alpha chain, which is derived from the carboxyl end of the proenzyme. The autoendoproteolytic cleavage occurs by a canonical serine protease mechanism, in which the side chain hydroxyl group of the serine supplies its oxygen atom to form the C-terminus of the beta chain, while the remainder of the serine residue undergoes an oxidative deamination to produce ammonia and the pyruvoyl prosthetic group on the alpha chain. During this reaction, the Ser that is part of the protease active site of the proenzyme becomes the pyruvoyl prosthetic group, which constitutes an essential element of the active site of the mature decarboxylase.

The protein localises to the cell membrane. The enzyme catalyses a 1,2-diacyl-sn-glycero-3-phospho-L-serine + H(+) = a 1,2-diacyl-sn-glycero-3-phosphoethanolamine + CO2. It functions in the pathway phospholipid metabolism; phosphatidylethanolamine biosynthesis; phosphatidylethanolamine from CDP-diacylglycerol: step 2/2. Functionally, catalyzes the formation of phosphatidylethanolamine (PtdEtn) from phosphatidylserine (PtdSer). The polypeptide is Phosphatidylserine decarboxylase proenzyme (Pseudomonas putida (strain ATCC 700007 / DSM 6899 / JCM 31910 / BCRC 17059 / LMG 24140 / F1)).